The chain runs to 379 residues: MTTATKPHQGRFRYLTRGSQPTPSKEAYLLPSLSEFGDIVTLPLTDLRPSLDLGQDSPYKLDVHGFTARRHDSALHSAPYSRASWNNEKLLRQIYFPEVEEFVKNVTGCKKAVVSAAVVRNRLYSEGDDSAPAEEEADTQASSSDDTSHMFPPIFGNSVKDGVCPAPKVHLDCTPKGARHHIRRYHSEVALAAEKVIEAENRLLESGVEWNDLKDHSGKVPHFALFSIWRPLKTVHRDPLALSSAASFPVSDYVPCDQREPTDHSIPSHLYRIVGRDDENIDKNDDTYQTQSYLAYAPRDAEKTSHAWHYISEQQPSDVLVIQLFDNEMEGHARAPLEGGKGKSDLGVGGAVHSAFELVDQDEDAEARESIEVRVAAFW.

Disordered stretches follow at residues methionine 1 to proline 23 and glutamate 126 to methionine 150. A compositionally biased stretch (acidic residues) spans glutamate 126–aspartate 138.

Belongs to the asaB hydroxylase/desaturase family.

It participates in pigment biosynthesis. Its function is as follows. Oxidoreductase; part of the gene cluster that mediates the biosynthesis of the yellow pigment chrysogine. Pyruvic acid and anthranilic acid are likely substrates for the nonribosomal peptide synthetase chry1/NRPS14, with pyruvic acid adenylated by the first A domain and anthranilic acid by the second. If pyruvic acid and anthranilic acid are merged and released from chry1/NRPS14 by hydrolysis, a subsequent amidation would lead to 2-pyruvoylaminobenzamide. This process is probably catalyzed by the amidotransferase chry2 using glutamine as amino donor. The dehydrogenase chry5 that has a terminal berberine bridge domain for C-N cyclization could catalyze the cyclization of 2-pyruvoylaminobenzamide to yield acetyl-4(3H)-quinazolidinone. A final reduction of acetyl-4(3H)-quinazolidinone catalyzed by the oxidoreductase chry4 would result in chrysogine. This chain is Oxidoreductase chry3, found in Gibberella zeae (strain ATCC MYA-4620 / CBS 123657 / FGSC 9075 / NRRL 31084 / PH-1) (Wheat head blight fungus).